A 230-amino-acid polypeptide reads, in one-letter code: Orotidine 5'-phosphate decarboxylase (230 aa).

Substrate-binding positions include Asp10, Lys31, 58-67, Thr117, Arg179, Gln188, Gly208, and Arg209; that span reads DLKLHDIPNT. Catalysis depends on Lys60, which acts as the Proton donor.

The protein belongs to the OMP decarboxylase family. Type 1 subfamily. Homodimer.

It carries out the reaction orotidine 5'-phosphate + H(+) = UMP + CO2. Its pathway is pyrimidine metabolism; UMP biosynthesis via de novo pathway; UMP from orotate: step 2/2. Functionally, catalyzes the decarboxylation of orotidine 5'-monophosphate (OMP) to uridine 5'-monophosphate (UMP). The protein is Orotidine 5'-phosphate decarboxylase of Staphylococcus haemolyticus (strain JCSC1435).